Consider the following 318-residue polypeptide: Glutathione synthetase (318 aa).

Residues 133-317 form the ATP-grasp domain; sequence KMYALQFTSV…LGQQVMAWLF (185 aa). 159–215 lines the ATP pocket; the sequence is VQQQGMAVLKPLGGKGGEGILFLQAGDRNLNSMIEISTQRGQLPVMLQEYLPAAKEG. 2 residues coordinate Mg(2+): glutamate 288 and asparagine 290.

Belongs to the prokaryotic GSH synthase family. Mg(2+) is required as a cofactor. Requires Mn(2+) as cofactor.

The catalysed reaction is gamma-L-glutamyl-L-cysteine + glycine + ATP = glutathione + ADP + phosphate + H(+). It participates in sulfur metabolism; glutathione biosynthesis; glutathione from L-cysteine and L-glutamate: step 2/2. The protein is Glutathione synthetase of Thermosynechococcus vestitus (strain NIES-2133 / IAM M-273 / BP-1).